Consider the following 737-residue polypeptide: Autolysin (737 aa).

Residues 1 to 13 (MKKESMSRIERRK) are compositionally biased toward basic and acidic residues. 3 disordered regions span residues 1 to 28 (MKKE…KKST), 51 to 132 (AEAT…TDSS), and 335 to 360 (PSSG…SGTN). An N-terminal signal peptide occupies residues 1–53 (MKKESMSRIERRKAQQRKKTPVQWKKSTTLFSSALIVSSVGTPVALLPVTAEA). The segment covering 67 to 117 (PTTETGLVETPTTETTPGTTEQPTTDSSTTTESTTESSKETPTTPSTEQPT) has biased composition (low complexity). Polar residues predominate over residues 118-132 (ADSTTPVESGTTDSS). Residues 339–352 (GNTGGGTVNPGTGG) show a composition bias toward gly residues. Residues 361–404 (TYYTVKSGDTLNKIAAQYGVSVANLRSWNGISGDLIFVGQKLIV) form the LysM 1 domain. The segment at 409-429 (SGNTGGSGSGGSNNNQSGTNT) is disordered. Positions 410–419 (GNTGGSGSGG) are enriched in gly residues. Residues 420 to 429 (SNNNQSGTNT) are compositionally biased toward low complexity. LysM domains lie at 429–472 (TYYT…KLIV), 497–540 (TYYT…KIIV), 565–608 (TYYT…KIIV), 631–674 (TSYT…TIIV), and 693–736 (KRHT…TLKV).

The protein belongs to the glycosyl hydrolase 73 family.

The protein resides in the secreted. Its function is as follows. Hydrolyzes the cell wall of E.faecalis and M.lysodeikticus. May play an important role in cell wall growth and cell separation. This is Autolysin from Enterococcus faecalis (strain ATCC 700802 / V583).